The sequence spans 720 residues: MITANSFERTIGGRKLVIESGKLARLADAAITIRYADTELLVTLCSAKKPREGVDFLPLTIDYEERMYAAGKIPGGFIRREGRPSEQAILAGRLTDRPLRPLLPKEWRNDLQIIITVIASDKENDADIWGVVGASTVLAMSEIPYEGPVGASRIGYINGEFVLNPTFAQLESSQLDLVVVSTRKAVVMIEAGSKEIPEDIMINAIEFAHKANQELIDLQDEIRAKLGKEKLPVPVLEIPEEVKTAVAAFVKGRVNEALSHQDKTARENAVEGLQAELVAALSETFAEGDILAAYDKEIKKAIRSTILEKDIRVNGRGIKQLRQLDAETGLLPRVHGSALFTRGDTQVMAITTLGSLQESQQLDGLSAEDTKRFMLHYNFAPFSTGEVKRSGSPGRREIGHGALAERALVPVLPTPEEFPYTIRLVADVVGSSGSTSMGSVCSSSLSLMDAGVPVKKAVAGISIGLITGENDTYCTITDIEGIEDNYGDMDFKVAGTRDGITAIQVDMKVKGISFDIIRDAIYQAKEARYNILDVMDKALAQPKTELSPYAPRMYKINIDPSKIGSVIGSGGKTIRSIIEQTNTTVDIENDGTVVIGATDEASAKKAIKIIEDLTKDIEAGSIYTGKVTRIMTFGAFVEILPGKEGMVHISELADHRVEKVEDIVKVGDDITVKVIEIDNQGRVNLSHRVILNPNAVPISRNRDSQPRRPGPFRPSDRSNS.

The Mg(2+) site is built by D484 and D490. A KH domain is found at 551 to 610; it reads PRMYKINIDPSKIGSVIGSGGKTIRSIIEQTNTTVDIENDGTVVIGATDEASAKKAIKII. One can recognise an S1 motif domain in the interval 620-688; sequence GSIYTGKVTR…NQGRVNLSHR (69 aa). The disordered stretch occupies residues 697–720; the sequence is PISRNRDSQPRRPGPFRPSDRSNS.

It belongs to the polyribonucleotide nucleotidyltransferase family. The cofactor is Mg(2+).

The protein localises to the cytoplasm. It carries out the reaction RNA(n+1) + phosphate = RNA(n) + a ribonucleoside 5'-diphosphate. Functionally, involved in mRNA degradation. Catalyzes the phosphorolysis of single-stranded polyribonucleotides processively in the 3'- to 5'-direction. This Dehalococcoides mccartyi (strain CBDB1) protein is Polyribonucleotide nucleotidyltransferase.